The chain runs to 314 residues: MSATGRAPCGLPRIGLGTAVQGPRPDPVRAAVLRAIQLGYRHFDTAAHYATEAPIGEAAAEAVRTGLVASREDLFVTSKVWCADAHRDRVLPALRRTLSNLQMEYVDLYMVHWPVTMKAGRFTAPFTPEDFEPFDMRAVWEAMEECHRLGLAKAIGVCNFSCKKLETLLSFATIPPVVNQVEINPVWQQRKLREFCRAKGIQLCAYSPLGAKGTHWGSDSVMDSGVLHEIAKSKGKTVAQVCLRWVYEQGDCLIVKSFDEGRMKENLDIVDWELSEEERQRISKIPQRKINQGRRYVSEHGPYKSFEELWDGEI.

Asp-44 contacts NADP(+). The active-site Proton donor is Tyr-49. His-112 serves as a coordination point for substrate. NADP(+) contacts are provided by residues 158–159 (CN), Gln-180, 258–266 (FDEGRMKEN), and 273–281 (ELSEEERQR).

It belongs to the aldo/keto reductase family.

It catalyses the reaction 2'-deoxymugineate + NAD(+) = 3''-deamino-3''-oxonicotianamine + NADH + H(+). The enzyme catalyses 2'-deoxymugineate + NADP(+) = 3''-deamino-3''-oxonicotianamine + NADPH + H(+). It functions in the pathway siderophore biosynthesis. Its function is as follows. Catalyzes the reduction of a 3''-keto intermediate during the biosynthesis of 2'-deoxymugineic acid (DMA) from L-Met. Involved in the formation of phytosiderophores (MAs) belonging to the mugineic acid family and required to acquire iron. The chain is Deoxymugineic acid synthase 1 from Zea mays (Maize).